The sequence spans 513 residues: ATP synthase subunit alpha (513 aa).

ATP is bound at residue 169–176 (GDRQTGKT).

This sequence belongs to the ATPase alpha/beta chains family. As to quaternary structure, F-type ATPases have 2 components, CF(1) - the catalytic core - and CF(0) - the membrane proton channel. CF(1) has five subunits: alpha(3), beta(3), gamma(1), delta(1), epsilon(1). CF(0) has three main subunits: a(1), b(2) and c(9-12). The alpha and beta chains form an alternating ring which encloses part of the gamma chain. CF(1) is attached to CF(0) by a central stalk formed by the gamma and epsilon chains, while a peripheral stalk is formed by the delta and b chains.

The protein localises to the cell inner membrane. It carries out the reaction ATP + H2O + 4 H(+)(in) = ADP + phosphate + 5 H(+)(out). Produces ATP from ADP in the presence of a proton gradient across the membrane. The alpha chain is a regulatory subunit. The chain is ATP synthase subunit alpha from Idiomarina loihiensis (strain ATCC BAA-735 / DSM 15497 / L2-TR).